The primary structure comprises 429 residues: Enolase (429 aa).

Position 163 (Gln163) interacts with (2R)-2-phosphoglycerate. Residue Glu205 is the Proton donor of the active site. The Mg(2+) site is built by Asp242, Glu287, and Asp314. Residues Lys339, Arg368, Ser369, and Lys390 each coordinate (2R)-2-phosphoglycerate. Lys339 (proton acceptor) is an active-site residue.

It belongs to the enolase family. It depends on Mg(2+) as a cofactor.

The protein localises to the cytoplasm. It localises to the secreted. It is found in the cell surface. It carries out the reaction (2R)-2-phosphoglycerate = phosphoenolpyruvate + H2O. The protein operates within carbohydrate degradation; glycolysis; pyruvate from D-glyceraldehyde 3-phosphate: step 4/5. Its function is as follows. Catalyzes the reversible conversion of 2-phosphoglycerate (2-PG) into phosphoenolpyruvate (PEP). It is essential for the degradation of carbohydrates via glycolysis. The protein is Enolase of Anaeromyxobacter dehalogenans (strain 2CP-C).